An 861-amino-acid polypeptide reads, in one-letter code: Bifunctional uridylyltransferase/uridylyl-removing enzyme (861 aa).

A uridylyltransferase region spans residues 1–321; it reads MKNDNRIIKN…VYHQKQKIIR (321 aa). The uridylyl-removing stretch occupies residues 322–678; sequence LDDEFQLSNR…IMPHHSQGGT (357 aa). Positions 440 to 562 constitute an HD domain; that stretch reads VDQHTLFVIR…LPHARYLDYL (123 aa). ACT domains follow at residues 679–760 and 788–861; these read EVFI…AVSR and QLFL…KSKY.

It belongs to the GlnD family. Mg(2+) is required as a cofactor.

The enzyme catalyses [protein-PII]-L-tyrosine + UTP = [protein-PII]-uridylyl-L-tyrosine + diphosphate. It catalyses the reaction [protein-PII]-uridylyl-L-tyrosine + H2O = [protein-PII]-L-tyrosine + UMP + H(+). Its activity is regulated as follows. Uridylyltransferase (UTase) activity is inhibited by glutamine, while glutamine activates uridylyl-removing (UR) activity. Modifies, by uridylylation and deuridylylation, the PII regulatory proteins (GlnB and homologs), in response to the nitrogen status of the cell that GlnD senses through the glutamine level. Under low glutamine levels, catalyzes the conversion of the PII proteins and UTP to PII-UMP and PPi, while under higher glutamine levels, GlnD hydrolyzes PII-UMP to PII and UMP (deuridylylation). Thus, controls uridylylation state and activity of the PII proteins, and plays an important role in the regulation of nitrogen assimilation and metabolism. This chain is Bifunctional uridylyltransferase/uridylyl-removing enzyme, found in Legionella pneumophila (strain Corby).